Here is a 434-residue protein sequence, read N- to C-terminus: Probable glucuronosyltransferase Os02g0520750 (434 aa).

The Cytoplasmic portion of the chain corresponds to 1–10 (MVGARAGRVP). Residues 11 to 31 (AAAAAAAAVLIVAACVFSSLA) traverse the membrane as a helical; Signal-anchor for type II membrane protein segment. Residues 32-434 (GAAAAAEVVG…GPVADLKPWK (403 aa)) lie on the Lumenal side of the membrane. N-linked (GlcNAc...) asparagine glycosylation is found at N160 and N421.

This sequence belongs to the glycosyltransferase 47 family.

The protein resides in the golgi apparatus membrane. Its function is as follows. Involved in the synthesis of glucuronoxylan hemicellulose in secondary cell walls. The protein is Probable glucuronosyltransferase Os02g0520750 of Oryza sativa subsp. japonica (Rice).